The sequence spans 162 residues: Protein lon-8 (162 aa).

Residues 1 to 23 (MRNSRFCAILAVISAISVSYVLA) form the signal peptide.

It localises to the secreted. In terms of biological role, secreted protein that is involved in larval elongation, early adult growth and male tail development. The sequence is that of Protein lon-8 from Caenorhabditis elegans.